A 307-amino-acid chain; its full sequence is Ribonuclease HIII (307 aa).

Residues 93 to 307 (MSVIGSDEVG…ANTQKAKKWL (215 aa)) enclose the RNase H type-2 domain. Asp99, Glu100, and Asp204 together coordinate a divalent metal cation.

It belongs to the RNase HII family. RnhC subfamily. It depends on Mn(2+) as a cofactor. Requires Mg(2+) as cofactor.

Its subcellular location is the cytoplasm. It catalyses the reaction Endonucleolytic cleavage to 5'-phosphomonoester.. Endonuclease that specifically degrades the RNA of RNA-DNA hybrids. The protein is Ribonuclease HIII of Bacillus pumilus (strain SAFR-032).